A 132-amino-acid chain; its full sequence is Interleukin-13 (132 aa).

The N-terminal stretch at 1–18 (MALLLTTVIALTCLGGFA) is a signal peptide. Residues Asn-38, Asn-49, Asn-57, and Asn-72 are each glycosylated (N-linked (GlcNAc...) asparagine). 2 disulfide bridges follow: Cys-48-Cys-76 and Cys-64-Cys-90.

Belongs to the IL-4/IL-13 family. Interacts with IL13RA2.

Its subcellular location is the secreted. Functionally, cytokine that plays important roles in allergic inflammation and immune response to parasite infection. Synergizes with IL2 in regulating interferon-gamma synthesis. Stimulates B-cell proliferation, and activation of eosinophils, basophils, and mast cells. Plays an important role in controlling IL33 activity by modulating the production of transmembrane and soluble forms of interleukin-1 receptor-like 1/IL1RL1. Displays the capacity to antagonize Th1-driven proinflammatory immune response and downregulates synthesis of many proinflammatory cytokines including IL1, IL6, IL10, IL12 and TNF-alpha through a mechanism that partially involves suppression of NF-kappa-B. Also functions on nonhematopoietic cells, including endothelial cells where it induces vascular cell adhesion protein 1/VCAM1, which is important in the recruitment of eosinophils. Exerts its biological effects through its receptors which comprises the IL4R chain and the IL13RA1 chain, to activate JAK1 and TYK2, leading to the activation of STAT6. Aside from IL13RA1, another receptor IL13RA2 acts as a high affinity decoy for IL13 and mediates internalization and depletion of extracellular IL13. This chain is Interleukin-13 (IL13), found in Pan troglodytes (Chimpanzee).